The following is a 497-amino-acid chain: Transcription termination/antitermination protein NusA (497 aa).

Residues 135-200 (GKILTGIVKK…RGAQLFVTRS (66 aa)) form the S1 motif domain. The region spanning 302 to 372 (RHTIDIAVDS…LKIDQKISNI (71 aa)) is the KH domain. 2 consecutive repeat copies span residues 364-414 (KIDQ…KKAL) and 439-489 (GMNQ…RNIC). The segment at 364-489 (KIDQKISNIL…MLIMAARNIC (126 aa)) is 2 X 51 AA approximate repeats.

Belongs to the NusA family. In terms of assembly, monomer. Binds directly to the core enzyme of the DNA-dependent RNA polymerase and to nascent RNA.

The protein localises to the cytoplasm. Its function is as follows. Participates in both transcription termination and antitermination. The sequence is that of Transcription termination/antitermination protein NusA from Buchnera aphidicola subsp. Baizongia pistaciae (strain Bp).